The sequence spans 64 residues: Beta-defensin 5 (64 aa).

An N-terminal signal peptide occupies residues 1–23 (MKIHYLLFAFLLVLLSPLAGVFS). Cystine bridges form between Cys-32–Cys-60, Cys-39–Cys-53, and Cys-43–Cys-61.

This sequence belongs to the beta-defensin family.

Its subcellular location is the secreted. Has antibacterial activity. The sequence is that of Beta-defensin 5 (Defb5) from Mus musculus (Mouse).